A 507-amino-acid chain; its full sequence is Alkyl hydroperoxide reductase subunit F (507 aa).

207 to 222 (DVLIVGGGPASGSAAI) lines the FAD pocket. C335 and C338 are joined by a disulfide. Residue 347 to 361 (DVAVIGGGNSGVEAA) participates in NAD(+) binding. Residue 467-477 (TNVPGIFAAGD) coordinates FAD.

It belongs to the class-II pyridine nucleotide-disulfide oxidoreductase family. In terms of assembly, homodimer. The cofactor is FAD.

Serves to protect the cell against DNA damage by alkyl hydroperoxides. It can use either NADH or NADPH as electron donor for direct reduction of redox dyes or of alkyl hydroperoxides when combined with the AhpC protein. The protein is Alkyl hydroperoxide reductase subunit F (ahpF) of Staphylococcus aureus (strain NCTC 8325 / PS 47).